A 286-amino-acid chain; its full sequence is Small ribosomal subunit protein uS2 (286 aa).

Residues 213–286 form a disordered region; the sequence is EEQAQNNKWA…GAQEGGEWGS (74 aa). A compositionally biased stretch (low complexity) spans 227-241; the sequence is SPALSAAVPSSAAPV. Positions 244-270 are enriched in polar residues; that stretch reads WSSSPSKETTEWGASNTAAAAKSSWSN. The segment covering 274-286 has biased composition (gly residues); the sequence is GEWGAQEGGEWGS.

This sequence belongs to the universal ribosomal protein uS2 family. In terms of assembly, component of the small ribosomal subunit. Mature ribosomes consist of a small (40S) and a large (60S) subunit. The 40S subunit contains about 33 different proteins and 1 molecule of RNA (18S). The 60S subunit contains about 49 different proteins and 3 molecules of RNA (28S, 5.8S and 5S). Interacts with ribosomal protein S21.

The protein localises to the cytoplasm. Functionally, required for the assembly and/or stability of the 40S ribosomal subunit. Required for the processing of the 20S rRNA-precursor to mature 18S rRNA in a late step of the maturation of 40S ribosomal subunits. The polypeptide is Small ribosomal subunit protein uS2 (Trichoplax adhaerens (Trichoplax reptans)).